Here is a 716-residue protein sequence, read N- to C-terminus: UvrABC system protein C (716 aa).

A GIY-YIG domain is found at 14 to 94 (AEPGCYLMKD…IKRHRPRFNI (81 aa)). In terms of domain architecture, UVR spans 206–241 (TELVERLHGRMDEAADALRFEDAARLRDQLQAVERS).

This sequence belongs to the UvrC family. In terms of assembly, interacts with UvrB in an incision complex.

Its subcellular location is the cytoplasm. In terms of biological role, the UvrABC repair system catalyzes the recognition and processing of DNA lesions. UvrC both incises the 5' and 3' sides of the lesion. The N-terminal half is responsible for the 3' incision and the C-terminal half is responsible for the 5' incision. The chain is UvrABC system protein C from Anaeromyxobacter sp. (strain Fw109-5).